A 279-amino-acid polypeptide reads, in one-letter code: Large ribosomal subunit protein uL24m (279 aa).

The transit peptide at 1–31 (MRDLRKLIPRLRGPGTNVLKMKKPLPLHMRT) directs the protein to the mitochondrion. Positions 34-51 (REHLNKSDPTVKDDKSAK) are enriched in basic and acidic residues. The segment at 34 to 56 (REHLNKSDPTVKDDKSAKPELPF) is disordered. In terms of domain architecture, KOW spans 70-100 (KGDYVYVHQGPLKGKWGRVVETNKYTNGITI). The tract at residues 185 to 204 (PRPKTEDKPKDPEGKLDTKN) is disordered. A compositionally biased stretch (basic and acidic residues) spans 187-202 (PKTEDKPKDPEGKLDT).

It belongs to the universal ribosomal protein uL24 family. Component of the mitochondrial large ribosomal subunit (mt-LSU). Mature yeast 74S mitochondrial ribosomes consist of a small (37S) and a large (54S) subunit. The 37S small subunit contains a 15S ribosomal RNA (15S mt-rRNA) and at least 32 different proteins. The 54S large subunit contains a 21S rRNA (21S mt-rRNA) and at least 45 different proteins. uL24m forms the wall of the exit tunnel.

The protein resides in the mitochondrion. In terms of biological role, component of the mitochondrial ribosome (mitoribosome), a dedicated translation machinery responsible for the synthesis of mitochondrial genome-encoded proteins, including at least some of the essential transmembrane subunits of the mitochondrial respiratory chain. The mitoribosomes are attached to the mitochondrial inner membrane and translation products are cotranslationally integrated into the membrane. This is Large ribosomal subunit protein uL24m (mrpl40) from Schizosaccharomyces pombe (strain 972 / ATCC 24843) (Fission yeast).